The chain runs to 205 residues: Guanylate kinase (205 aa).

A Guanylate kinase-like domain is found at 3 to 181 (GSLYIISAPS…ALSELHSIFL (179 aa)). 10-17 (APSGAGKT) lines the ATP pocket.

Belongs to the guanylate kinase family.

The protein resides in the cytoplasm. The catalysed reaction is GMP + ATP = GDP + ADP. Its function is as follows. Essential for recycling GMP and indirectly, cGMP. The sequence is that of Guanylate kinase from Hydrogenovibrio crunogenus (strain DSM 25203 / XCL-2) (Thiomicrospira crunogena).